The chain runs to 363 residues: 3-isopropylmalate dehydrogenase (363 aa).

An NAD(+)-binding site is contributed by 79–92 (GPKWEHLPPNDQPE). Substrate contacts are provided by arginine 100, arginine 110, arginine 139, and aspartate 228. Positions 228, 252, and 256 each coordinate Mg(2+). 286 to 298 (GSAPDIAGKNIAN) lines the NAD(+) pocket.

Belongs to the isocitrate and isopropylmalate dehydrogenases family. LeuB type 1 subfamily. In terms of assembly, homodimer. Requires Mg(2+) as cofactor. Mn(2+) is required as a cofactor.

It localises to the cytoplasm. The enzyme catalyses (2R,3S)-3-isopropylmalate + NAD(+) = 4-methyl-2-oxopentanoate + CO2 + NADH. The protein operates within amino-acid biosynthesis; L-leucine biosynthesis; L-leucine from 3-methyl-2-oxobutanoate: step 3/4. Catalyzes the oxidation of 3-carboxy-2-hydroxy-4-methylpentanoate (3-isopropylmalate) to 3-carboxy-4-methyl-2-oxopentanoate. The product decarboxylates to 4-methyl-2 oxopentanoate. The sequence is that of 3-isopropylmalate dehydrogenase from Vibrio vulnificus (strain CMCP6).